Here is a 304-residue protein sequence, read N- to C-terminus: Glutaminase (304 aa).

Residues serine 63, asparagine 114, glutamate 158, asparagine 165, tyrosine 189, tyrosine 240, and valine 258 each coordinate substrate.

The protein belongs to the glutaminase family. Homotetramer.

The catalysed reaction is L-glutamine + H2O = L-glutamate + NH4(+). The protein is Glutaminase of Shewanella baltica (strain OS223).